The primary structure comprises 125 residues: Glycine cleavage system H protein (125 aa).

A Lipoyl-binding domain is found at 19-101; it reads VGTVGISDYA…EGAAWFFKLT (83 aa). At Lys60 the chain carries N6-lipoyllysine.

It belongs to the GcvH family. The glycine cleavage system is composed of four proteins: P, T, L and H. Requires (R)-lipoate as cofactor.

Functionally, the glycine cleavage system catalyzes the degradation of glycine. The H protein shuttles the methylamine group of glycine from the P protein to the T protein. This is Glycine cleavage system H protein from Paramagnetospirillum magneticum (strain ATCC 700264 / AMB-1) (Magnetospirillum magneticum).